Reading from the N-terminus, the 404-residue chain is Chorismate synthase (404 aa).

NADP(+)-binding residues include arginine 40 and arginine 46. Residues 135 to 137 (RAS), 256 to 257 (QA), glycine 300, 315 to 319 (KPIST), and arginine 341 each bind FMN.

Belongs to the chorismate synthase family. Homotetramer. It depends on FMNH2 as a cofactor.

The catalysed reaction is 5-O-(1-carboxyvinyl)-3-phosphoshikimate = chorismate + phosphate. It functions in the pathway metabolic intermediate biosynthesis; chorismate biosynthesis; chorismate from D-erythrose 4-phosphate and phosphoenolpyruvate: step 7/7. In terms of biological role, catalyzes the anti-1,4-elimination of the C-3 phosphate and the C-6 proR hydrogen from 5-enolpyruvylshikimate-3-phosphate (EPSP) to yield chorismate, which is the branch point compound that serves as the starting substrate for the three terminal pathways of aromatic amino acid biosynthesis. This reaction introduces a second double bond into the aromatic ring system. The polypeptide is Chorismate synthase (Mycobacterium sp. (strain JLS)).